The sequence spans 243 residues: MNNTSKLLNLSNVSYYIGQQRLLSHINIDIAVNETISVIGPNGAGKSTLVKLILGLIEPTSGQVTPSAPLQIGYVPQRFSVPPILPLRVSDLLAQAHKKRLMAEQRQFIFDKLSLTHLLSRQMLHLSGGETQRVLLARALLDKPNLLILDEPMQGLDPETEVWLYQFIDELPEFLRCAMLVVSHDLHWVMKGSRRVICLNKHICCEGQPSELAISSEFQKLFGHHYEQPYVHQPHACEHHAPS.

One can recognise an ABC transporter domain in the interval 8 to 225 (LNLSNVSYYI…SEFQKLFGHH (218 aa)). ATP is bound at residue 40–47 (GPNGAGKS).

Belongs to the ABC transporter superfamily. Zinc importer (TC 3.A.1.15.5) family. As to quaternary structure, the complex is composed of two ATP-binding proteins (ZnuC), two transmembrane proteins (ZnuB) and a solute-binding protein (ZnuA).

The protein resides in the cell inner membrane. The enzyme catalyses Zn(2+)(out) + ATP(in) + H2O(in) = Zn(2+)(in) + ADP(in) + phosphate(in) + H(+)(in). Its function is as follows. Part of the ABC transporter complex ZnuABC involved in zinc import. Responsible for energy coupling to the transport system. The chain is Zinc import ATP-binding protein ZnuC from Psychrobacter arcticus (strain DSM 17307 / VKM B-2377 / 273-4).